The following is a 323-amino-acid chain: Aquaporin-4 (323 aa).

The Cytoplasmic portion of the chain corresponds to M1–K36. Residues C13 and C17 are each lipidated (S-palmitoyl cysteine). A helical membrane pass occupies residues A37 to I57. Over N58–D69 the chain is Extracellular. A helical membrane pass occupies residues M70–G89. At H90–G93 the chain is on the cytoplasmic side. An intramembrane region (discontinuously helical) is located at residues G94–T101. Positions N97 to A99 match the NPA 1 motif. Over V102–S115 the chain is Cytoplasmic. S111 bears the Phosphoserine; by PKG mark. Residues V116–V136 form a helical membrane-spanning segment. Residues T137–T155 are Extracellular-facing. An N-linked (GlcNAc...) asparagine glycan is attached at N153. The helical transmembrane segment at A156–A176 threads the bilayer. The Cytoplasmic segment spans residues S177–D184. Position 180 is a phosphoserine; by PKC (S180). A helical transmembrane segment spans residues V185–I205. N-linked (GlcNAc...) asparagine glycosylation is present at N206. At N206 to T208 the chain is on the extracellular side. Residues G209–V222 constitute an intramembrane region (discontinuously helical). Positions N213–A215 match the NPA 2 motif. The Extracellular portion of the chain corresponds to I223–W231. The helical transmembrane segment at I232–F252 threads the bilayer. At C253–V323 the chain is on the cytoplasmic side. 2 positions are modified to phosphoserine: S276 and S285. T289 is modified (phosphothreonine). S321 is subject to Phosphoserine.

Belongs to the MIP/aquaporin (TC 1.A.8) family. Homotetramer. The tetramers can form oligomeric arrays in membranes. The size of the oligomers differs between tissues and is smaller in skeletal muscle than in brain. Interaction between AQP4 oligomeric arrays in close-by cells can contribute to cell-cell adhesion. Part of a complex containing MLC1, TRPV4, HEPACAM and ATP1B1. Phosphorylation by PKC at Ser-180 reduces conductance by 50%. Phosphorylation by PKG at Ser-111 in response to glutamate increases conductance by 40%; this increase is not due to increased presence at the cell membrane. In terms of processing, isoform 2: Palmitoylated on its N-terminal region. Isoform 1: Not palmitoylated. Detected in brain cortex, especially around cortical blood vessels, and subjacent to pia, with lower levels in parenchymal membranes. Detected in ependymal and astroglial cells in brain. Detected in supporting Hensen's cells, inner sulcus cells and Claudius cells in the inner ear. Detected in skeletal muscle. Detected in gastric parietal cells. Detected in principal cells in collecting ducts in kidney medulla (at protein level). Detected in brain, heart and skeletal muscle.

The protein localises to the cell membrane. It localises to the basolateral cell membrane. The protein resides in the endosome membrane. It is found in the sarcolemma. Its subcellular location is the cell projection. The enzyme catalyses H2O(in) = H2O(out). Its function is as follows. Forms a water-specific channel. Plays an important role in brain water homeostasis and in glymphatic solute transport. Required for a normal rate of water exchange across the blood brain interface. Required for normal levels of cerebrospinal fluid influx into the brain cortex and parenchyma along paravascular spaces that surround penetrating arteries, and for normal drainage of interstitial fluid along paravenous drainage pathways. Thereby, it is required for normal clearance of solutes from the brain interstitial fluid, including soluble beta-amyloid peptides derived from APP. Plays a redundant role in urinary water homeostasis and urinary concentrating ability. This is Aquaporin-4 (Aqp4) from Mus musculus (Mouse).